We begin with the raw amino-acid sequence, 540 residues long: Glucose-6-phosphate isomerase (540 aa).

Glu351 (proton donor) is an active-site residue. Active-site residues include His382 and Lys506.

The protein belongs to the GPI family.

It is found in the cytoplasm. It carries out the reaction alpha-D-glucose 6-phosphate = beta-D-fructose 6-phosphate. It participates in carbohydrate biosynthesis; gluconeogenesis. The protein operates within carbohydrate degradation; glycolysis; D-glyceraldehyde 3-phosphate and glycerone phosphate from D-glucose: step 2/4. Its function is as follows. Catalyzes the reversible isomerization of glucose-6-phosphate to fructose-6-phosphate. The protein is Glucose-6-phosphate isomerase of Corynebacterium glutamicum (strain R).